Here is a 270-residue protein sequence, read N- to C-terminus: Mevalonyl-coenzyme A hydratase sidH (270 aa).

The PTS1-type peroxisomal targeting signal motif lies at 268 to 270 (SKL).

The protein belongs to the enoyl-CoA hydratase/isomerase family.

It localises to the peroxisome. The protein operates within siderophore biosynthesis. Functionally, mevalonyl-coenzyme A hydratase; part of the siderophore biosynthetic pathway. Aspergillus fumigatus produces 4 types of siderophores, low-molecular-mass iron chelators, including excreted fusarinine C (FsC) and triacetylfusarinine C (TAFC) for iron uptake and intacellular ferricrocin (FC) for hyphal and hydroxyferricrocin (HFC) for conidial iron distribution and storage. TAFC consists of 3 N(2)-acetyl-N(5)-anhydromevalonyl-N(5)-hydroxyornithine residues cyclically linked by ester bonds; FC is a cyclic hexapeptide with the structure Gly-Ser-Gly-(N(5)-acetyl-N(5)-hydroxyornithine)x3. The biosynthesis of all four siderophores depends on the hydroxylation of ornithine, catalyzed by the monooxygenase sidA. Subsequently, the pathways for biosynthesis of extra- and intracellular siderophores split. For biosynthesis of extracellular siderophores, the transacylase sidF transfers anhydromevalonyl to N(5)-hydroxyornithine. The required anhydromevalonyl-CoA moiety is derived from mevalonate by CoA ligation and dehydration catalyzed by sidI and sidH respectively. The acetylation of N(5)-hydroxyornithine for FC biosynthesis involves the constitutively expressed sidL. FC is hydroxylated to HFC by an as yet uncharacterized enzyme during conidiation. Assembly of fusarinine C (FsC) and FC is catalyzed by two different nonribosomal peptide synthetases (NRPS), sidD and sidC respectively. Subsequently, sidG catalyzes N2-acetylation of FsC for forming TAFC. Both extra- and intracellular siderophores are crucial for growth during iron limitation and virulence. This Aspergillus fumigatus (strain ATCC MYA-4609 / CBS 101355 / FGSC A1100 / Af293) (Neosartorya fumigata) protein is Mevalonyl-coenzyme A hydratase sidH.